Reading from the N-terminus, the 408-residue chain is Aminopeptidase T (408 aa).

The a divalent metal cation site is built by glutamate 250, glutamate 316, glutamate 340, histidine 345, histidine 376, and aspartate 378.

The protein belongs to the peptidase M29 family. Homodimer. The cofactor is Co(2+). Zn(2+) is required as a cofactor. It depends on Mg(2+) as a cofactor.

Its function is as follows. Metal-dependent exopeptidase. This is Aminopeptidase T from Thermus thermophilus (strain ATCC 27634 / DSM 579 / HB8).